A 460-amino-acid chain; its full sequence is MPAANAQSRGSYWITTFGCQMNKADSERMAGILESMGYRAANAELEADLVLYNTCTIRDNAEQKVYSYLGRQAQRKRLDPNLTLIVAGCVAQQEGESLLRRVPELDLVMGPQHANRLEVLLNRVDSGQQVVATEDHHILEDITTARRDSSICGWVNVIYGCNERCTYCVVPSVRGKEQSRLPEAIRLEMEGLAAQGYKEITLLGQNIDAYGRDLPGITPEGRRQHTLTDLLHQVHDVSGIKRIRFATSHPRYFTERLIDACADLPKLCEHFHIPFQSGDNDVLRAMARGYTVERYRRIIDRIRERMPDASLSADVIVAFPGETDLQYQRTLDLIEEIGFDQVNTAAYSPRPNTPAATWDNQLPEEVKVIRLQTINALVERCARERNARYAGRTEEVLAEGINPKDPSQLMGRTRTNRLTFFQAAGPDGHQHNPGDLVNVRIDAVRSFSLSGTPLPCVEQR.

One can recognise an MTTase N-terminal domain in the interval 10-126 (GSYWITTFGC…LEVLLNRVDS (117 aa)). [4Fe-4S] cluster is bound by residues cysteine 19, cysteine 55, cysteine 89, cysteine 161, cysteine 165, and cysteine 168. Residues 147 to 384 (RDSSICGWVN…NALVERCARE (238 aa)) form the Radical SAM core domain. A TRAM domain is found at 387–455 (ARYAGRTEEV…SFSLSGTPLP (69 aa)).

The protein belongs to the methylthiotransferase family. MiaB subfamily. As to quaternary structure, monomer. The cofactor is [4Fe-4S] cluster.

The protein localises to the cytoplasm. The catalysed reaction is N(6)-dimethylallyladenosine(37) in tRNA + (sulfur carrier)-SH + AH2 + 2 S-adenosyl-L-methionine = 2-methylsulfanyl-N(6)-dimethylallyladenosine(37) in tRNA + (sulfur carrier)-H + 5'-deoxyadenosine + L-methionine + A + S-adenosyl-L-homocysteine + 2 H(+). Catalyzes the methylthiolation of N6-(dimethylallyl)adenosine (i(6)A), leading to the formation of 2-methylthio-N6-(dimethylallyl)adenosine (ms(2)i(6)A) at position 37 in tRNAs that read codons beginning with uridine. This chain is tRNA-2-methylthio-N(6)-dimethylallyladenosine synthase, found in Parasynechococcus marenigrum (strain WH8102).